The chain runs to 329 residues: MTDRTAAPSGPHIPVLLKPLLAAVAPVTGRWLDGTFGAGGYTKGLLAAGADQVIGVDRDPLAFEMAQPWAAEYGDRLVLQQGVFSRMDEYAQELDGVVLDLGVSSMQLDLAERGFSFMKEGPLDMRMSQDGPSAADLVAELSEVQLADVLYSFGEERASRRIAKAIVKERAQEPITTTLRLAEIIEGCLPRPKPGQSHPATRSFQALRIAVNGEYEELMGGLLAAERALKPGGLLAVVTFHSVEDRMVKRFFQHRANKTGNANRYAPAMEEQPSQFELVTRKAVGPDKDELAQNPRSRSALLRVGRRTDAAPVEITAKELSMPQLKETR.

S-adenosyl-L-methionine-binding positions include 39-41 (GGY), Asp-57, Phe-84, Asp-100, and Gln-107. The tract at residues 285 to 305 (GPDKDELAQNPRSRSALLRVG) is disordered.

It belongs to the methyltransferase superfamily. RsmH family.

The protein resides in the cytoplasm. The enzyme catalyses cytidine(1402) in 16S rRNA + S-adenosyl-L-methionine = N(4)-methylcytidine(1402) in 16S rRNA + S-adenosyl-L-homocysteine + H(+). In terms of biological role, specifically methylates the N4 position of cytidine in position 1402 (C1402) of 16S rRNA. This chain is Ribosomal RNA small subunit methyltransferase H, found in Ruegeria sp. (strain TM1040) (Silicibacter sp.).